Here is a 109-residue protein sequence, read N- to C-terminus: Phosphocarrier protein HPr (109 aa).

In terms of domain architecture, HPr spans 22–109; that stretch reads ELSAVFTIRN…EVFNSGFGEL (88 aa). Residue His-36 is the Pros-phosphohistidine intermediate of the active site.

This sequence belongs to the HPr family.

Its subcellular location is the cytoplasm. In terms of biological role, general (non sugar-specific) component of the phosphoenolpyruvate-dependent sugar phosphotransferase system (sugar PTS). This major carbohydrate active-transport system catalyzes the phosphorylation of incoming sugar substrates concomitantly with their translocation across the cell membrane. The phosphoryl group from phosphoenolpyruvate (PEP) is transferred to the phosphoryl carrier protein HPr by enzyme I. Phospho-HPr then transfers it to the PTS EIIA domain. The polypeptide is Phosphocarrier protein HPr (ptsH) (Chlamydia trachomatis serovar D (strain ATCC VR-885 / DSM 19411 / UW-3/Cx)).